Reading from the N-terminus, the 223-residue chain is Thiamine-phosphate synthase (223 aa).

4-amino-2-methyl-5-(diphosphooxymethyl)pyrimidine contacts are provided by residues 42–46 (QLRDK) and N83. Positions 84 and 103 each coordinate Mg(2+). S122 is a 4-amino-2-methyl-5-(diphosphooxymethyl)pyrimidine binding site. 148 to 150 (TPT) serves as a coordination point for 2-[(2R,5Z)-2-carboxy-4-methylthiazol-5(2H)-ylidene]ethyl phosphate. K151 is a binding site for 4-amino-2-methyl-5-(diphosphooxymethyl)pyrimidine. G179 serves as a coordination point for 2-[(2R,5Z)-2-carboxy-4-methylthiazol-5(2H)-ylidene]ethyl phosphate.

It belongs to the thiamine-phosphate synthase family. Mg(2+) serves as cofactor.

It carries out the reaction 2-[(2R,5Z)-2-carboxy-4-methylthiazol-5(2H)-ylidene]ethyl phosphate + 4-amino-2-methyl-5-(diphosphooxymethyl)pyrimidine + 2 H(+) = thiamine phosphate + CO2 + diphosphate. It catalyses the reaction 2-(2-carboxy-4-methylthiazol-5-yl)ethyl phosphate + 4-amino-2-methyl-5-(diphosphooxymethyl)pyrimidine + 2 H(+) = thiamine phosphate + CO2 + diphosphate. The enzyme catalyses 4-methyl-5-(2-phosphooxyethyl)-thiazole + 4-amino-2-methyl-5-(diphosphooxymethyl)pyrimidine + H(+) = thiamine phosphate + diphosphate. The protein operates within cofactor biosynthesis; thiamine diphosphate biosynthesis; thiamine phosphate from 4-amino-2-methyl-5-diphosphomethylpyrimidine and 4-methyl-5-(2-phosphoethyl)-thiazole: step 1/1. Condenses 4-methyl-5-(beta-hydroxyethyl)thiazole monophosphate (THZ-P) and 2-methyl-4-amino-5-hydroxymethyl pyrimidine pyrophosphate (HMP-PP) to form thiamine monophosphate (TMP). In Mycobacterium avium (strain 104), this protein is Thiamine-phosphate synthase.